The following is a 382-amino-acid chain: Probable dual-specificity RNA methyltransferase RlmN (382 aa).

The Proton acceptor role is filled by E118. Residues 124–370 form the Radical SAM core domain; the sequence is YDKRVTMCIS…TTVRDTRGSD (247 aa). C131 and C375 form a disulfide bridge. Residues C138, C142, and C145 each contribute to the [4Fe-4S] cluster site. Residues 196 to 197, S230, 253 to 255, and N332 each bind S-adenosyl-L-methionine; these read GE and SLH. C375 acts as the S-methylcysteine intermediate in catalysis.

The protein belongs to the radical SAM superfamily. RlmN family. The cofactor is [4Fe-4S] cluster.

The protein localises to the cytoplasm. It carries out the reaction adenosine(2503) in 23S rRNA + 2 reduced [2Fe-2S]-[ferredoxin] + 2 S-adenosyl-L-methionine = 2-methyladenosine(2503) in 23S rRNA + 5'-deoxyadenosine + L-methionine + 2 oxidized [2Fe-2S]-[ferredoxin] + S-adenosyl-L-homocysteine. The catalysed reaction is adenosine(37) in tRNA + 2 reduced [2Fe-2S]-[ferredoxin] + 2 S-adenosyl-L-methionine = 2-methyladenosine(37) in tRNA + 5'-deoxyadenosine + L-methionine + 2 oxidized [2Fe-2S]-[ferredoxin] + S-adenosyl-L-homocysteine. Functionally, specifically methylates position 2 of adenine 2503 in 23S rRNA and position 2 of adenine 37 in tRNAs. The chain is Probable dual-specificity RNA methyltransferase RlmN from Kocuria rhizophila (strain ATCC 9341 / DSM 348 / NBRC 103217 / DC2201).